Reading from the N-terminus, the 213-residue chain is 5-methylthioribulose-1-phosphate/5-deoxyribulose-1-phosphate aldolase (213 aa).

The Proton donor/acceptor role is filled by E73. Co(2+) is bound by residues E73, H92, H94, and H155.

It belongs to the aldolase class II family. Co(2+) is required as a cofactor.

It catalyses the reaction 5-(methylsulfanyl)-D-ribulose 1-phosphate = 2-(methylsulfanyl)acetaldehyde + dihydroxyacetone phosphate. The enzyme catalyses 5-deoxy-D-ribulose 1-phosphate = dihydroxyacetone phosphate + acetaldehyde. Its pathway is amino-acid biosynthesis; L-methionine biosynthesis via salvage pathway. Its function is as follows. Uses 5-methylthioribulose-1-phosphate to yield 2-(methylthio)acetaldehyde and dihydroxyacetone phosphate. Can also use 5-deoxyribulose 1-phosphate to yield acetaldehyde and dihydroxyacetone phosphate. Part of a bifunctional DHAP-shunt salvage pathway for SAM by-products. The protein is 5-methylthioribulose-1-phosphate/5-deoxyribulose-1-phosphate aldolase of Escherichia coli O45:K1 (strain S88 / ExPEC).